A 371-amino-acid polypeptide reads, in one-letter code: MATTDVTVVVKIGTSSLTDTQTGLLRLSVLGPLVEVLTHLRRQGYAVILVSSGAVGVGCARLGWRQRPTAIAEKQAVAAVGQGRLIRLYDDLFSALNQPIAQVLLTRGDLVERSRYVNANRTFAQLLQMGVIPIVNENDTVAVEELKFGDNDSLSALVASMVQAKWLILLTDVDKLYSADPNRDPSAQPIERVLPGIPLQVKAEAQGKSGWGTGGMATKLTAAQIATAAGVTVVITNGKRPEQIPAILAGEAIGTRFDPAPQPASARKRWIAYGLIPEGSLTLDEGAVRAVCEQGRSLLPAGITAISGEFEAGAAVRLCDPSGQEVARGLVNYSAEELRQIKGKKTAEIPRILGYEGVDTAVHRDNLALLN.

Lysine 11 provides a ligand contact to ATP. Residues serine 52, aspartate 139, and asparagine 151 each contribute to the substrate site. ATP-binding positions include 171–172 and 213–219; these read TD and TGGMATK. Residues 278–356 form the PUA domain; it reads EGSLTLDEGA…AEIPRILGYE (79 aa).

It belongs to the glutamate 5-kinase family.

Its subcellular location is the cytoplasm. It carries out the reaction L-glutamate + ATP = L-glutamyl 5-phosphate + ADP. It participates in amino-acid biosynthesis; L-proline biosynthesis; L-glutamate 5-semialdehyde from L-glutamate: step 1/2. Its function is as follows. Catalyzes the transfer of a phosphate group to glutamate to form L-glutamate 5-phosphate. This Synechococcus sp. (strain JA-2-3B'a(2-13)) (Cyanobacteria bacterium Yellowstone B-Prime) protein is Glutamate 5-kinase.